The chain runs to 288 residues: MWQAISQQLSDTLLFEYQITEKVRLSGGDISESYMINDGEQRYFVKINDREFLHKFEVEAESLHLLRETSTIFVPEVVLVGKTKNNAFIILNYLPTKPLDDPENSFKFGQQLAQLHQWGEQKEFGFDTDNYLGSTLQPNQWHKKWCMFFAEQRIGWQLQLLKEKGVTLVDIDDFIDVVKQLLANHTPEPSLLHGDLWNGNVALTAFGPICFDPACYWGDRECDIAMTELFGGFQPEFYQGYESVMPLLPGYHERKDIYNLYHILNHCNLFGGHYLEQAQLTINKIISY.

92-94 (NYL) is an ATP binding site. The Proton acceptor role is filled by Asp195.

This sequence belongs to the fructosamine kinase family.

In terms of biological role, ketoamine kinase that phosphorylates ketoamines on the third carbon of the sugar moiety to generate ketoamine 3-phosphate. This is Probable ketoamine kinase VP1481 from Vibrio parahaemolyticus serotype O3:K6 (strain RIMD 2210633).